The sequence spans 1385 residues: DNA-directed RNA polymerase subunit beta' (1385 aa).

Zn(2+) is bound by residues Cys72, Cys74, Cys87, and Cys90. Residues Asp467, Asp469, and Asp471 each coordinate Mg(2+). Residues Cys829, Cys910, Cys917, and Cys920 each contribute to the Zn(2+) site.

Belongs to the RNA polymerase beta' chain family. As to quaternary structure, the RNAP catalytic core consists of 2 alpha, 1 beta, 1 beta' and 1 omega subunit. When a sigma factor is associated with the core the holoenzyme is formed, which can initiate transcription. The cofactor is Mg(2+). Requires Zn(2+) as cofactor.

It carries out the reaction RNA(n) + a ribonucleoside 5'-triphosphate = RNA(n+1) + diphosphate. In terms of biological role, DNA-dependent RNA polymerase catalyzes the transcription of DNA into RNA using the four ribonucleoside triphosphates as substrates. The sequence is that of DNA-directed RNA polymerase subunit beta' from Elusimicrobium minutum (strain Pei191).